The chain runs to 848 residues: Neuroligin-3 (848 aa).

Positions 1 to 37 (MWLRLGPPSLSLSPKPTVGRSLCLTLWFLSLALRAST) are cleaved as a signal peptide. Topologically, residues 38 to 709 (QAPAPTVNTH…NPRDYSTELS (672 aa)) are extracellular. Asparagine 98 carries N-linked (GlcNAc...) asparagine glycosylation. Cysteine 106 and cysteine 141 are joined by a disulfide. The interval 170-195 (RKGGSGAKKQGEDLADNDGDEDEDIR) is disordered. A compositionally biased stretch (acidic residues) spans 182 to 194 (DLADNDGDEDEDI). Cystine bridges form between cysteine 340–cysteine 351 and cysteine 510–cysteine 544. Asparagine 545 carries an N-linked (GlcNAc...) asparagine glycan. 2 stretches are compositionally biased toward polar residues: residues 645–656 (TKVPPPDTTHSS) and 677–689 (AYSN…SWNG). The disordered stretch occupies residues 645 to 694 (TKVPPPDTTHSSHITRRPNGKTWSTKRPAISPAYSNENAQGSWNGDQDAG). Residues 710–730 (VTIAVGASLLFLNVLAFAALY) traverse the membrane as a helical segment. Residues 731-848 (YRKDKRRQEP…LPHSHSTTRV (118 aa)) lie on the Cytoplasmic side of the membrane. The residue at position 745 (serine 745) is a Phosphoserine. Position 792 is a phosphotyrosine (tyrosine 792).

This sequence belongs to the type-B carboxylesterase/lipase family. In terms of assembly, homodimer, and heterodimer with NLGN1 and NLGN2. Interacts with neurexins NRXN1, NRXN2 and NRXN3. Interaction with neurexins is mediated by heparan sulfate glycan modification on neurexin. Interacts (via its C-terminus) with DLG4/PSD-95 (via PDZ domain 3). In terms of tissue distribution, expressed in the blood vessel walls (at protein level). Detected in throughout the brain and in spinal cord. Detected in brain, and at lower levels in pancreas islet beta cells.

It is found in the cell membrane. The protein localises to the synapse. In terms of biological role, cell surface protein involved in cell-cell-interactions via its interactions with neurexin family members. Plays a role in synapse function and synaptic signal transmission, and may mediate its effects by clustering other synaptic proteins. May promote the initial formation of synapses, but is not essential for this. May also play a role in glia-glia or glia-neuron interactions in the developing peripheral nervous system. This chain is Neuroligin-3 (NLGN3), found in Homo sapiens (Human).